Consider the following 440-residue polypeptide: Glycerophosphocholine cholinephosphodiesterase ENPP6 (440 aa).

A signal peptide spans 1-22 (MAVKLGTLLLALALGLAQPASA). The substrate site is built by Asp-32, Ser-71, and Asn-92. Zn(2+)-binding residues include Asp-32 and Ser-71. Residue Ser-71 is the Nucleophile of the active site. Ser-71 carries the post-translational modification Phosphoserine. Asn-100 and Asn-118 each carry an N-linked (GlcNAc...) asparagine glycan. A disulfide bridge connects residues Cys-142 and Cys-154. Asp-193 provides a ligand contact to substrate. The Zn(2+) site is built by Asp-193, His-197, Asp-240, and His-241. His-241 contributes to the substrate binding site. Asn-341 carries N-linked (GlcNAc...) asparagine glycosylation. Residue His-354 coordinates substrate. His-354 lines the Zn(2+) pocket. A glycan (N-linked (GlcNAc...) asparagine) is linked at Asn-404. Ser-419 carries the GPI-anchor amidated serine lipid modification. Residues 420–440 (TAPPVWPSHCALALILLFLLA) constitute a propeptide, removed in mature form.

The protein belongs to the nucleotide pyrophosphatase/phosphodiesterase family. As to quaternary structure, homodimer; disulfide-linked. Homotetramer. Requires Zn(2+) as cofactor. Predominantly expressed in kidney and brain. In the kidney, expressed specifically in the proximal tubules and thin descending limbs of Henle (at protein level).

The protein localises to the cell membrane. The enzyme catalyses sn-glycerol 3-phosphocholine + H2O = phosphocholine + glycerol + H(+). The catalysed reaction is a 1-acyl-sn-glycero-3-phosphocholine + H2O = a 1-acyl-sn-glycerol + phosphocholine + H(+). It catalyses the reaction a 1-O-alkyl-sn-glycero-3-phosphocholine + H2O = a 1-O-alkyl-sn-glycerol + phosphocholine + H(+). It carries out the reaction 1-dodecanoyl-sn-glycero-3-phosphocholine + H2O = 1-dodecanoyl-sn-glycerol + phosphocholine + H(+). The enzyme catalyses 1-hexadecanoyl-sn-glycero-3-phosphocholine + H2O = 1-hexadecanoyl-sn-glycerol + phosphocholine + H(+). The catalysed reaction is 1-(5Z,8Z,11Z,14Z-eicosatetraenoyl)-sn-glycero-3-phosphocholine + H2O = 1-(5Z,8Z,11Z,14Z-eicosatetraenoyl)-sn-glycerol + phosphocholine + H(+). It catalyses the reaction 1-tetradecanoyl-sn-glycero-3-phosphocholine + H2O = 1-tetradecanoyl-sn-glycerol + phosphocholine + H(+). It carries out the reaction sphing-4-enine-phosphocholine + H2O = sphing-4-enine + phosphocholine + H(+). The enzyme catalyses 1-(9Z-octadecenoyl)-sn-glycero-3-phosphocholine + H2O = 1-(9Z-octadecenoyl)-sn-glycerol + phosphocholine + H(+). The catalysed reaction is 1-(9Z,12Z)-octadecadienoyl-sn-glycero-3-phosphocholine + H2O = 1-(9Z,12Z-octadecadienoyl)-sn-glycerol + phosphocholine + H(+). It catalyses the reaction glycero-2-phosphocholine + H2O = phosphocholine + glycerol + H(+). With respect to regulation, inhibited by EDTA and EGTA in vitro. In terms of biological role, choline-specific glycerophosphodiesterase that hydrolyzes glycerophosphocholine (GPC) and lysophosphatidylcholine (LPC) and contributes to supplying choline to the cells. Has a preference for LPC with short (12:0 and 14:0) or polyunsaturated (18:2 and 20:4) fatty acids. In vitro, hydrolyzes only choline-containing lysophospholipids, such as sphingosylphosphorylcholine (SPC), platelet-activating factor (PAF) and lysoPAF, but not other lysophospholipids. In Homo sapiens (Human), this protein is Glycerophosphocholine cholinephosphodiesterase ENPP6.